The following is a 121-amino-acid chain: Small ribosomal subunit protein uS13 (121 aa).

The disordered stretch occupies residues 92–121 (HRMGLPCRGQKTKTNARTRKGPRRGAARRK). Basic residues predominate over residues 101 to 121 (QKTKTNARTRKGPRRGAARRK).

The protein belongs to the universal ribosomal protein uS13 family. As to quaternary structure, part of the 30S ribosomal subunit. Forms a loose heterodimer with protein S19. Forms two bridges to the 50S subunit in the 70S ribosome.

Its function is as follows. Located at the top of the head of the 30S subunit, it contacts several helices of the 16S rRNA. In the 70S ribosome it contacts the 23S rRNA (bridge B1a) and protein L5 of the 50S subunit (bridge B1b), connecting the 2 subunits; these bridges are implicated in subunit movement. Contacts the tRNAs in the A and P-sites. The protein is Small ribosomal subunit protein uS13 of Desulfotalea psychrophila (strain LSv54 / DSM 12343).